The primary structure comprises 452 residues: Bifunctional protein GlmU (452 aa).

The interval 1–230 (MSRSRSAIIL…ADEVLGVNSR (230 aa)) is pyrophosphorylase. Residues 10–13 (LAAG), K24, Q75, and 80–81 (GT) contribute to the UDP-N-acetyl-alpha-D-glucosamine site. Residue D105 coordinates Mg(2+). UDP-N-acetyl-alpha-D-glucosamine-binding residues include G141, E156, N171, and N228. Residue N228 coordinates Mg(2+). Residues 231–251 (ADLAEAEAAFQSRMRQSMMAD) are linker. The segment at 252–452 (GVTLIAPETV…ARKARKDSQT (201 aa)) is N-acetyltransferase. Residues R317 and K335 each coordinate UDP-N-acetyl-alpha-D-glucosamine. H347 serves as the catalytic Proton acceptor. UDP-N-acetyl-alpha-D-glucosamine-binding residues include Y350 and N361. Residues A364, 370–371 (NY), S389, T407, and R424 contribute to the acetyl-CoA site.

In the N-terminal section; belongs to the N-acetylglucosamine-1-phosphate uridyltransferase family. This sequence in the C-terminal section; belongs to the transferase hexapeptide repeat family. As to quaternary structure, homotrimer. Mg(2+) is required as a cofactor.

The protein localises to the cytoplasm. It carries out the reaction alpha-D-glucosamine 1-phosphate + acetyl-CoA = N-acetyl-alpha-D-glucosamine 1-phosphate + CoA + H(+). It catalyses the reaction N-acetyl-alpha-D-glucosamine 1-phosphate + UTP + H(+) = UDP-N-acetyl-alpha-D-glucosamine + diphosphate. It functions in the pathway nucleotide-sugar biosynthesis; UDP-N-acetyl-alpha-D-glucosamine biosynthesis; N-acetyl-alpha-D-glucosamine 1-phosphate from alpha-D-glucosamine 6-phosphate (route II): step 2/2. The protein operates within nucleotide-sugar biosynthesis; UDP-N-acetyl-alpha-D-glucosamine biosynthesis; UDP-N-acetyl-alpha-D-glucosamine from N-acetyl-alpha-D-glucosamine 1-phosphate: step 1/1. Its pathway is bacterial outer membrane biogenesis; LPS lipid A biosynthesis. Its function is as follows. Catalyzes the last two sequential reactions in the de novo biosynthetic pathway for UDP-N-acetylglucosamine (UDP-GlcNAc). The C-terminal domain catalyzes the transfer of acetyl group from acetyl coenzyme A to glucosamine-1-phosphate (GlcN-1-P) to produce N-acetylglucosamine-1-phosphate (GlcNAc-1-P), which is converted into UDP-GlcNAc by the transfer of uridine 5-monophosphate (from uridine 5-triphosphate), a reaction catalyzed by the N-terminal domain. The polypeptide is Bifunctional protein GlmU (Maricaulis maris (strain MCS10) (Caulobacter maris)).